The sequence spans 728 residues: Catalase-peroxidase (728 aa).

The tryptophyl-tyrosyl-methioninium (Trp-Tyr) (with M-244) cross-link spans 91 to 218 (WHSAGTYRTA…LAAVQMGLIY (128 aa)). The Proton acceptor role is filled by H92. Residues 218–244 (YVNPEGPDGNPDPVAAARDIRDTFARM) constitute a cross-link (tryptophyl-tyrosyl-methioninium (Tyr-Met) (with W-91)). H259 lines the heme b pocket.

It belongs to the peroxidase family. Peroxidase/catalase subfamily. As to quaternary structure, homodimer or homotetramer. Requires heme b as cofactor. Post-translationally, formation of the three residue Trp-Tyr-Met cross-link is important for the catalase, but not the peroxidase activity of the enzyme.

The catalysed reaction is H2O2 + AH2 = A + 2 H2O. It carries out the reaction 2 H2O2 = O2 + 2 H2O. In terms of biological role, bifunctional enzyme with both catalase and broad-spectrum peroxidase activity. The sequence is that of Catalase-peroxidase from Burkholderia pseudomallei (strain 1710b).